Reading from the N-terminus, the 761-residue chain is Ribonucleoside-diphosphate reductase 1 subunit alpha (761 aa).

One can recognise an ATP-cone domain in the interval 5-95; the sequence is LLVTKRDGRT…IFHLRKKAFG (91 aa). ATP contacts are provided by residues Lys9, 15 to 21, Thr55, and Lys91; that span reads ERINLDK. Thr209 contacts GDP. A disulfide bridge links Cys225 with Cys462. Residues 232-234, Arg262, and Arg269 each bind dTTP; that span reads DSL. Residue Asn437 coordinates GDP. Asn437 acts as the Proton acceptor in catalysis. Cys439 serves as the catalytic Cysteine radical intermediate. GDP contacts are provided by residues Glu441 and 623–625; that span reads ETS. The Proton acceptor role is filled by Glu441.

Belongs to the ribonucleoside diphosphate reductase large chain family. Tetramer of two alpha (R1) and two beta (R2) subunits. The B1 protein is a dimer of alpha subunits. A radical transfer pathway occurs between 'Tyr-122' of R2 and R1.

It catalyses the reaction a 2'-deoxyribonucleoside 5'-diphosphate + [thioredoxin]-disulfide + H2O = a ribonucleoside 5'-diphosphate + [thioredoxin]-dithiol. Under complex allosteric control mediated by deoxynucleoside triphosphates and ATP binding to separate specificity and activation sites on the alpha subunit. The type of nucleotide bound at the specificity site determines substrate preference. It seems probable that ATP makes the enzyme reduce CDP and UDP, dGTP favors ADP reduction and dTTP favors GDP reduction. Stimulated by ATP and inhibited by dATP binding to the activity site. In terms of biological role, provides the precursors necessary for DNA synthesis. Catalyzes the biosynthesis of deoxyribonucleotides from the corresponding ribonucleotides. R1 contains the binding sites for both substrates and allosteric effectors and carries out the actual reduction of the ribonucleotide. The protein is Ribonucleoside-diphosphate reductase 1 subunit alpha (nrdA) of Salmonella typhimurium (strain LT2 / SGSC1412 / ATCC 700720).